The following is a 66-amino-acid chain: Toxin Aah6 (66 aa).

Positions 2-65 (RDGYVVKNGT…LYGDDGTYCS (64 aa)) constitute an LCN-type CS-alpha/beta domain. A glycan (N-linked (GlcNAc...) asparagine) is linked at Asn9. 4 disulfide bridges follow: Cys13/Cys64, Cys17/Cys40, Cys26/Cys45, and Cys30/Cys47.

The protein belongs to the long (4 C-C) scorpion toxin superfamily. Sodium channel inhibitor family. Beta subfamily. In terms of processing, N-glycans are core-fucosylated, heterogeneous and short which could be the result of extensive trimming. Expressed by the venom gland.

The protein localises to the secreted. In terms of biological role, beta toxins bind voltage-independently at site-4 of sodium channels and shift the voltage of activation toward more negative potentials thereby affecting sodium channel activation and promoting spontaneous and repetitive firing. This toxin is active only on insects. This toxin has very low anti-insect activity. The protein is Toxin Aah6 of Androctonus australis (Sahara scorpion).